The chain runs to 429 residues: Zygotic gap protein knirps (429 aa).

Residues 2 to 78 (NQTCKVCGEP…VGMSKGGSRY (77 aa)) constitute a DNA-binding region (nuclear receptor). 2 consecutive NR C4-type zinc fingers follow at residues 5–25 (CKVC…CEGC) and 42–66 (CKNE…LRKC). Low complexity predominate over residues 112–126 (SVGGAPSASSPVGSP). 4 disordered regions span residues 112 to 148 (SVGG…QQQQ), 223 to 250 (QSVD…SSAR), 338 to 357 (TSRS…QEVE), and 375 to 397 (SSSS…AEVK). 2 stretches are compositionally biased toward polar residues: residues 225–237 (VDSV…FSPA) and 338–349 (TSRSSVHSFNDS). The segment covering 375–393 (SSSSSSHSAAHSPNTTTAH) has biased composition (low complexity).

This sequence belongs to the nuclear hormone receptor family. NR0 subfamily.

The protein resides in the nucleus. Its function is as follows. Transcriptional repressor. Binds to multiple sites in the eve stripe 3 enhancer element. Plays an essential role in the segmentation process both by refining the expression patterns of gap genes and by establishing pair-rules stripes of gene expression. The sequence is that of Zygotic gap protein knirps (kni) from Drosophila melanogaster (Fruit fly).